We begin with the raw amino-acid sequence, 183 residues long: Ribulose bisphosphate carboxylase small subunit, chloroplastic (183 aa).

The N-terminal 59 residues, 1-59, are a transit peptide targeting the chloroplast; that stretch reads MASSMISSGTVATVSADRPAPAQARMVAPFTGLKSSSASPVTRKSNDITSIASNGGRVQ.

Belongs to the RuBisCO small chain family. Heterohexadecamer of 8 large and 8 small subunits.

It is found in the plastid. It localises to the chloroplast. Functionally, ruBisCO catalyzes two reactions: the carboxylation of D-ribulose 1,5-bisphosphate, the primary event in carbon dioxide fixation, as well as the oxidative fragmentation of the pentose substrate. Both reactions occur simultaneously and in competition at the same active site. Although the small subunit is not catalytic it is essential for maximal activity. The polypeptide is Ribulose bisphosphate carboxylase small subunit, chloroplastic (Malus sp. (Crab apple)).